Reading from the N-terminus, the 91-residue chain is Large ribosomal subunit protein uL23c (91 aa).

Belongs to the universal ribosomal protein uL23 family. Part of the 50S ribosomal subunit.

It localises to the plastid. The protein localises to the chloroplast. Its function is as follows. Binds to 23S rRNA. This is Large ribosomal subunit protein uL23c (rpl23) from Marchantia polymorpha (Common liverwort).